The following is a 445-amino-acid chain: Mannan endo-1,4-beta-mannosidase 2 (445 aa).

The first 27 residues, 1 to 27, serve as a signal peptide directing secretion; sequence MAVGNGLILYHILGLASCIALVYFSLG. Position 110 (Trp-110) interacts with substrate. Asn-181 carries N-linked (GlcNAc...) asparagine glycosylation. Asn-226 is a binding site for substrate. The Proton donor role is filled by Glu-227. Tyr-309 contacts substrate. Glu-349 acts as the Nucleophile in catalysis. Substrate is bound at residue Trp-391.

This sequence belongs to the glycosyl hydrolase 5 (cellulase A) family. Expressed in stems and seeds, and at lower levels in roots and leaves.

It is found in the secreted. The catalysed reaction is Random hydrolysis of (1-&gt;4)-beta-D-mannosidic linkages in mannans, galactomannans and glucomannans.. In Oryza sativa subsp. japonica (Rice), this protein is Mannan endo-1,4-beta-mannosidase 2 (MAN2).